The sequence spans 444 residues: Putative F-box protein At1g64540 (444 aa).

The region spanning 4 to 50 (REFISNLPDEILGKILSLLPTKLGVSTSVLSKRWRNLILLVDNFDLE) is the F-box domain.

The protein is Putative F-box protein At1g64540 of Arabidopsis thaliana (Mouse-ear cress).